We begin with the raw amino-acid sequence, 117 residues long: Snaclec CHH-B subunit beta (117 aa).

Cystine bridges form between cysteine 2–cysteine 13, cysteine 30–cysteine 115, and cysteine 92–cysteine 107. Positions 9–116 (YEGHCYRVFQ…CSKTHNVVCK (108 aa)) constitute a C-type lectin domain.

Belongs to the snaclec family. In terms of assembly, heterodimer of subunits alpha and beta; disulfide-linked. As to expression, expressed by the venom gland.

It is found in the secreted. Functionally, binds to the subunit GPIbalpha (GP1BA) of the platelet GPIb/V/IX receptor system. It inhibits ristocetin- and vWF-induced platelet aggregation in platelet-rich plasma by inhibiting the binding of vWF to GPIbalpha. The polypeptide is Snaclec CHH-B subunit beta (Crotalus horridus (Timber rattlesnake)).